Reading from the N-terminus, the 88-residue chain is Small ribosomal subunit protein eS21 (88 aa).

Belongs to the eukaryotic ribosomal protein eS21 family. In terms of assembly, component of the small ribosomal subunit. Mature ribosomes consist of a small (40S) and a large (60S) subunit. The 40S subunit contains about 33 different proteins and 1 molecule of RNA (18S). The 60S subunit contains about 49 different proteins and 3 molecules of RNA (25S, 5.8S and 5S).

The protein localises to the cytoplasm. Its function is as follows. Required for the processing of the 20S rRNA-precursor to mature 18S rRNA in a late step of the maturation of 40S ribosomal subunits. Has a physiological role leading to 18S rRNA stability. This Aspergillus fumigatus (strain ATCC MYA-4609 / CBS 101355 / FGSC A1100 / Af293) (Neosartorya fumigata) protein is Small ribosomal subunit protein eS21 (rps21).